A 313-amino-acid chain; its full sequence is MSQEFAHLSVLLNETVDGLNIQSDGIYIDGTFGRGGHSRHVLSHLGENGRLIAIDRDPQAIEAAKQFADDPRFQIVHGGFGQLAEYVEELGLTGKINGVLLDLGVSSPQLDDAERGFSFLRDGPLDMRMDNSQGQTAAQWIARAEIEDMAWVFKTYGEEKNSRHIARCIAADREKTPFLRTKDLADLIARITKNKERNKHPATRVFQAIRIYINSELEQIDQALEGALAVLAPQGRLSVISFHSLEDRMVKRFIRRHSQGESVPHGLPIMEAELNKSRKLKAVSKALKPSDAELELNPRARSSVLRVAERLDY.

S-adenosyl-L-methionine-binding positions include 35-37 (GGH), aspartate 55, phenylalanine 80, aspartate 102, and glutamine 109.

Belongs to the methyltransferase superfamily. RsmH family.

The protein resides in the cytoplasm. It carries out the reaction cytidine(1402) in 16S rRNA + S-adenosyl-L-methionine = N(4)-methylcytidine(1402) in 16S rRNA + S-adenosyl-L-homocysteine + H(+). Specifically methylates the N4 position of cytidine in position 1402 (C1402) of 16S rRNA. This is Ribosomal RNA small subunit methyltransferase H from Shewanella frigidimarina (strain NCIMB 400).